An 875-amino-acid chain; its full sequence is MSGTKPDILWAPHQVDRFVVCDSELSLYHVESAVNSELKAGSLRLSEDSAATLLSINSDTPYMKCVAWYLNYDPECLLAVGQANGRVVLTSLGQDHNSKFKDLIGKEFVPKHARQCNTLAWNPLDSNWLAAGLDKHRADFSVLIWDICSKYTPDIVPMEKVRLSAGEAETTLLVTKPLYELGQNDASLSLCWLPRDQKLLLAGMHRNLAIFDLRNTSQKMFVNTKAVQGVTVDPYFHDRVASFYEGQVAIWDLRKFEKPVLTLTEQPKPLTKVAWCPTRTGLLATLTRDSNIIRLYDMQHTPTPIGDETEPTIIERSVQPCDNYIASFAWHPTSQNRMIVVTPNRTMSDFTVFERISLAWSPITSLMWACGRHLYECAEEESDNSLEKDIATKMRLRALSRYGLDTEQVWRNHILAGNEDPQLKSLWYTLHFMKQYTEDNDQKSPGNKGSLVYAGIKSIVKSSLGMVESSRHNWSGLDKQTDIQNLNEERILALQLCGWIKKGTDVDVGPFLNSLVQEGEWERAAAVALFNLDIRRAIQILNEGASSEKGDLNLNVVAMALSGYTDEKNSLWREMCSTLRLQLNNPYLCVMFAFLTSEAGAYDGVLYENKVAVRDRVAFACKFLGDAQLNKYIEKLTNEMKEAGNLEGILLTGLTKDGVDLMESYVDRTGDVQTASYCMLQGSPLDVLKDERVQYWIENYRNLLDAWRFWHKRAEFDIHRSKLDPSSKPLAQVFVSCNFCGKSISYSCSSVPHQGRGFSQYGVSGSPTKSKVTSCPGCRKPLPRCALCLINMGTPVSSCPGGSKSDEKVDLSKDKKLAQFNNWFTWCHNCRHGGHAGHMLSWFRDHAECPVSACTCKCMQLDTTGNLVPAETVQP.

WD repeat units follow at residues 58 to 100, 111 to 155, 182 to 221, 223 to 261, 265 to 306, 320 to 360, and 395 to 437; these read SDTP…NSKF, KHAR…TPDI, GQND…QKMF, NTKA…KPVL, EQPK…TPIG, PCDN…SLAW, and RLRA…KQYT. The C4-type zinc finger occupies 735–781; sequence VSCNFCGKSISYSCSSVPHQGRGFSQYGVSGSPTKSKVTSCPGCRKP. Residues Cys737 and Cys740 each contribute to the Zn(2+) site. Residues Ser759 and Ser766 each carry the phosphoserine modification. Zn(2+)-binding residues include Cys775, Cys778, Cys788, Cys827, Cys830, His832, His835, His838, Cys849, Cys854, and Cys858. The RING-type; atypical zinc-finger motif lies at 782–863; that stretch reads LPRCALCLIN…CTCKCMQLDT (82 aa).

This sequence belongs to the WD repeat mio family. Component of the GATOR2 subcomplex, composed of MIOS, SEC13, SEH1L, WDR24 and WDR59. The GATOR2 complex interacts with CASTOR1 and CASTOR2; the interaction is negatively regulated by arginine. CASTOR1 and CASTOR2 convey leucine availability via direct interaction with MIOS. The GATOR2 complex interacts with SESN1, SESN2 and SESN3; the interaction is negatively regulated by amino acids. Interacts with SAR1A and SAR1B; the interaction is direct, disrupted by leucine and mediates the interaction of SAR1A or SAR1B with the GATOR2 complex to negatively regulate the TORC1 signaling upon leucine deprivation. In terms of tissue distribution, widely expressed. In brain, expressed in neurons and glia (oligodendrocytes and astrocytes), with more abundance in neurons.

Its subcellular location is the lysosome membrane. Its activity is regulated as follows. The GATOR2 complex is negatively regulated by the upstream amino acid sensors CASTOR1 and SESN2, which sequester the GATOR2 complex in absence of amino acids. In the presence of abundant amino acids, GATOR2 is released from CASTOR1 and SESN2 and activated. As a component of the GATOR2 complex, functions as an activator of the amino acid-sensing branch of the mTORC1 signaling pathway. The GATOR2 complex indirectly activates mTORC1 through the inhibition of the GATOR1 subcomplex. GATOR2 probably acts as an E3 ubiquitin-protein ligase toward GATOR1. In the presence of abundant amino acids, the GATOR2 complex mediates ubiquitination of the NPRL2 core component of the GATOR1 complex, leading to GATOR1 inactivation. In the absence of amino acids, GATOR2 is inhibited, activating the GATOR1 complex. Within the GATOR2 complex, MIOS is required to prevent autoubiquitination of WDR24, the catalytic subunit of the complex. The GATOR2 complex is required for brain myelination. This Mus musculus (Mouse) protein is GATOR2 complex protein MIOS.